The sequence spans 217 residues: IMPACT family member YvyE (217 aa).

Belongs to the IMPACT family.

The polypeptide is IMPACT family member YvyE (yvyE) (Bacillus subtilis (strain 168)).